The primary structure comprises 132 residues: Ribosome-binding factor A (132 aa).

The tract at residues 113–132 is disordered; that stretch reads EANSTRAKDDDEADAPAKDD.

This sequence belongs to the RbfA family. In terms of assembly, monomer. Binds 30S ribosomal subunits, but not 50S ribosomal subunits or 70S ribosomes.

The protein localises to the cytoplasm. Functionally, one of several proteins that assist in the late maturation steps of the functional core of the 30S ribosomal subunit. Associates with free 30S ribosomal subunits (but not with 30S subunits that are part of 70S ribosomes or polysomes). Required for efficient processing of 16S rRNA. May interact with the 5'-terminal helix region of 16S rRNA. In Burkholderia ambifaria (strain MC40-6), this protein is Ribosome-binding factor A.